The sequence spans 46 residues: MTQRTLHGTCRKRRRVSGFRVRMRTRNGRAVIRARRKKGRERLAVY.

This sequence belongs to the bacterial ribosomal protein bL34 family.

The protein is Large ribosomal subunit protein bL34 of Trichodesmium erythraeum (strain IMS101).